Consider the following 224-residue polypeptide: MFITFEGIEGSGKSTALQGLAAWLQQHGHGVAVTREPGGSRLGRTLRSILLDLGNTDITPEAELFLYLADRAQHVAQVVRPALDEGMVVLSDRYADSTVVYQGYGRGLDPMMLRQFNDVAVGGLWPDLTILLDLEPEAGLNRALARNIREGMHAAEGRFEAESLAFHTRVREGYLTWAALHGGRYRVVDATQSPEDVVRDVVGIVAAALGDVSSGEAVSGRTGA.

ATP is bound at residue 7 to 14; sequence GIEGSGKS.

The protein belongs to the thymidylate kinase family.

The enzyme catalyses dTMP + ATP = dTDP + ADP. Functionally, phosphorylation of dTMP to form dTDP in both de novo and salvage pathways of dTTP synthesis. The polypeptide is Thymidylate kinase (Nitratidesulfovibrio vulgaris (strain DP4) (Desulfovibrio vulgaris)).